A 189-amino-acid polypeptide reads, in one-letter code: dTTP/UTP pyrophosphatase (189 aa).

D71 (proton acceptor) is an active-site residue.

Belongs to the Maf family. YhdE subfamily. A divalent metal cation serves as cofactor.

The protein localises to the cytoplasm. It catalyses the reaction dTTP + H2O = dTMP + diphosphate + H(+). The enzyme catalyses UTP + H2O = UMP + diphosphate + H(+). Nucleoside triphosphate pyrophosphatase that hydrolyzes dTTP and UTP. May have a dual role in cell division arrest and in preventing the incorporation of modified nucleotides into cellular nucleic acids. The sequence is that of dTTP/UTP pyrophosphatase from Pseudoalteromonas translucida (strain TAC 125).